Here is a 318-residue protein sequence, read N- to C-terminus: Aspartate carbamoyltransferase catalytic subunit (318 aa).

The carbamoyl phosphate site is built by Arg-58 and Thr-59. Lys-86 lines the L-aspartate pocket. 3 residues coordinate carbamoyl phosphate: Arg-108, His-141, and Gln-144. L-aspartate contacts are provided by Arg-174 and Arg-226. Positions 270 and 271 each coordinate carbamoyl phosphate.

This sequence belongs to the aspartate/ornithine carbamoyltransferase superfamily. ATCase family. Heterododecamer (2C3:3R2) of six catalytic PyrB chains organized as two trimers (C3), and six regulatory PyrI chains organized as three dimers (R2).

The enzyme catalyses carbamoyl phosphate + L-aspartate = N-carbamoyl-L-aspartate + phosphate + H(+). Its pathway is pyrimidine metabolism; UMP biosynthesis via de novo pathway; (S)-dihydroorotate from bicarbonate: step 2/3. Functionally, catalyzes the condensation of carbamoyl phosphate and aspartate to form carbamoyl aspartate and inorganic phosphate, the committed step in the de novo pyrimidine nucleotide biosynthesis pathway. The polypeptide is Aspartate carbamoyltransferase catalytic subunit (Lactobacillus gasseri (strain ATCC 33323 / DSM 20243 / BCRC 14619 / CIP 102991 / JCM 1131 / KCTC 3163 / NCIMB 11718 / NCTC 13722 / AM63)).